A 302-amino-acid chain; its full sequence is Probable alpha-L-glutamate ligase (302 aa).

The 184-residue stretch at 104–287 (LQLLSRKGVG…VAGLLIKFIE (184 aa)) folds into the ATP-grasp domain. ATP-binding positions include lysine 141, 178–179 (EY), aspartate 187, and 211–213 (RSN). Aspartate 248, glutamate 260, and asparagine 262 together coordinate Mg(2+). Mn(2+) is bound by residues aspartate 248, glutamate 260, and asparagine 262.

The protein belongs to the RimK family. The cofactor is Mg(2+). It depends on Mn(2+) as a cofactor.

The sequence is that of Probable alpha-L-glutamate ligase from Alcanivorax borkumensis (strain ATCC 700651 / DSM 11573 / NCIMB 13689 / SK2).